The sequence spans 282 residues: BURP domain-containing protein BNM2A (282 aa).

Positions 1 to 26 (MASLRFSVTFPALLSLLLLSLWVVEA) are cleaved as a signal peptide. One can recognise a BURP domain in the interval 60 to 282 (FFKISDLKLG…PLDNIVWVSK (223 aa)).

In terms of tissue distribution, expressed in the radicle and cotyledon of germinating seeds 2 days post-imbibition (DPI), in stems and roots of 30-DPI young plants and in floral buds, but not in fully open flowers or leaves. Expressed in the embryo and seed coat tissues of developing seeds. The protein accumulates only in seeds and only long after transcript accumulation becomes evident.

The protein localises to the protein storage vacuole. This is BURP domain-containing protein BNM2A from Brassica napus (Rape).